The primary structure comprises 118 residues: Small ribosomal subunit protein uS13 (118 aa).

The interval 92–118 (RRGHPLRGQRTRTNARTRKGPRKAIRK) is disordered.

Belongs to the universal ribosomal protein uS13 family. Part of the 30S ribosomal subunit. Forms a loose heterodimer with protein S19. Forms two bridges to the 50S subunit in the 70S ribosome.

Its function is as follows. Located at the top of the head of the 30S subunit, it contacts several helices of the 16S rRNA. In the 70S ribosome it contacts the 23S rRNA (bridge B1a) and protein L5 of the 50S subunit (bridge B1b), connecting the 2 subunits; these bridges are implicated in subunit movement. Contacts the tRNAs in the A and P-sites. This chain is Small ribosomal subunit protein uS13, found in Xanthomonas campestris pv. campestris (strain ATCC 33913 / DSM 3586 / NCPPB 528 / LMG 568 / P 25).